Reading from the N-terminus, the 211-residue chain is MTRVALTSAVNLAKKLHDAGIRNQAVLKAISHTPREMFLDNALAHKAYENTALPIGQGQTISQPYIVARMTELLLHKMPQRVLEVGTGSGYQAAILAQLVPQLCTIERIKGLQIQARQRLKRLDLHNVSFKYGDGWLGWANRSPFDAIMVTAAASTIPEALLSQLAEGGVLVLPVGEDTQQLMRITRTGERFSSETIETVKFVPLINGELA.

Residue Ser62 is part of the active site.

It belongs to the methyltransferase superfamily. L-isoaspartyl/D-aspartyl protein methyltransferase family.

The protein resides in the cytoplasm. It carries out the reaction [protein]-L-isoaspartate + S-adenosyl-L-methionine = [protein]-L-isoaspartate alpha-methyl ester + S-adenosyl-L-homocysteine. Catalyzes the methyl esterification of L-isoaspartyl residues in peptides and proteins that result from spontaneous decomposition of normal L-aspartyl and L-asparaginyl residues. It plays a role in the repair and/or degradation of damaged proteins. The sequence is that of Protein-L-isoaspartate O-methyltransferase from Shewanella baltica (strain OS195).